The following is a 664-amino-acid chain: Peroxisomal acyl-coenzyme A oxidase 1 (664 aa).

Residues Tyr-135, Gln-137, Thr-138, Ser-144, Gly-177, Arg-310, Gln-330, Arg-333, Gly-401, and Thr-422 each contribute to the FAD site. The Proton acceptor role is filled by Glu-424. Residue Asp-426 coordinates FAD. Residues Cys-467 and Cys-576 are joined by a disulfide bond. A Microbody targeting signal motif is present at residues 662-664 (ARL).

It belongs to the acyl-CoA oxidase family. As to quaternary structure, homodimer. Requires FAD as cofactor. In terms of tissue distribution, expressed mainly in flowers and young seedlings. Lower expression in roots, leaves and bracts.

It localises to the peroxisome. It carries out the reaction a 2,3-saturated acyl-CoA + O2 = a (2E)-enoyl-CoA + H2O2. Its function is as follows. Catalyzes the desaturation of both long- and medium-chain acyl-CoAs to 2-trans-enoyl-CoAs. Most active with C14-CoA. Activity on long-chain mono-unsaturated substrates is 40% higher than with the corresponding saturated substrates. Seems to be an important factor in the general metabolism of root tips. May be involved in the biosynthesis of jasmonic acid. The sequence is that of Peroxisomal acyl-coenzyme A oxidase 1 from Arabidopsis thaliana (Mouse-ear cress).